The following is a 224-amino-acid chain: Imidazoleglycerol-phosphate dehydratase (224 aa).

It belongs to the imidazoleglycerol-phosphate dehydratase family.

It catalyses the reaction D-erythro-1-(imidazol-4-yl)glycerol 3-phosphate = 3-(imidazol-4-yl)-2-oxopropyl phosphate + H2O. It participates in amino-acid biosynthesis; L-histidine biosynthesis; L-histidine from 5-phospho-alpha-D-ribose 1-diphosphate: step 6/9. This is Imidazoleglycerol-phosphate dehydratase (HIS3) from Cyberlindnera jadinii (Torula yeast).